A 2543-amino-acid chain; its full sequence is MPSQIPQWREPIAIVSMACRLPGGIDKPLDLWDHVRAGCSSATAIPKDRFNAENFLSMDPNQKGAQAFRGAHFVKRDIKQFDHKFFGISKDTATAMDPQQKQLLEVVYECLESANISMETISKSKIGCYCAMFVSDYHDMLMQDPEYLPTFIAIGTTRTMLANRVSHALDLGGPSVTIDTACSGALVALHLACQALQAGECDGAVIGASNLFLSPDYALSLTRLGAIAADGQCKTFDASANGYGRGEGTNAVYVKRLSDAIRDGDSIRAVIRGTSSNSSGATPAITEPSGRAQADTILQAYAQAGINDFSETGYFECHGTGTPVGDCIELGAVGSVFSESHKTQDALWVGSTKPNVGHSEAASGLSSLIKVVLALEKGEIPPNTNYKTPNPKIDFDGWRVRVPTVPQPWPSKSIRRASVNSLGIGGSTAHAVVEFYEPPQLTNGSTNGANAVNGTNGINGTNGINGINGVNGHHEDEEKTNDPYFLLFTSGASKSSRETNEQNLLEFLKSHEECKSLTSPLVKALNARSQINIRPWKSFAVAQSVDGLVQQLETNALKVGAGPTIGGSPRVLFTFTGQGAMWSQMGKRLLDAFPVARNSLYNLEEVVRELQSSKTPTWSLIDKLTTELSQEEIDSPAIAHPLCMAVQIALTDVLSSWGVLPDGVVGHSGGETAAAYACGALTAKEAITVAYYRGIACQNAPSGAMLVIRSAPNAKELQDALERNDVQIACFNGPQNLTLAGSAEGVKNVAAELSTHGIVSRAVAVTRAYHTRAMKTVVDEYVGQLKGVIQPKIGRVPMYSSVTGLELKGTEVDADYWGANLVSPVLYTDAVTLALTSSNLKFDLCIELGPHSLLSRPTSEIVKSLPDSPQLPFFATMLRNADSSQQLMNLAGDLVLNGKQLDLDQVNKIAGKVGRLPNHIQDNLPAYAWDYSSTPWTEPRNSQEWRFRKSPRHEILGSRCRGVNPSAPTWRNKVSIEDAPWLVDHQVNGIVTFSFTTGIAMVIEAMMQVQEENKEIDWANHSFELQDFVFSNSIILPDESHIDLFLTLIPDNDNAKSEETWYDFTISSLRGDVDIRHCHGRAAVLETSKDNVALRRRTSWHHMPLKVPLKSYYKTLERVGYGYGPKFQLLTEVRVRPSLSACSAKIDMTSTAQSPVPGQRYLLHPAMMDAALQTPALANRSGFFQEIDTLLLPSKMKRISIRMPAKNTDVASCTTNTSPVGFSRIQGSVECYDSLSRPFFVVEGLQMDRATSDDNTTLPWLRLTWKPDIGDISSSDPMLSPIKIQSLPAEKKLVNLENLVKELIPLIVENGIEKGKDLAPHLLSYHSWFLDQAELHKERLAARHKQQNGFATVQDAIMNVVANSGISQTVDASIVSQLAINMSRIFQGDVEALAVWLENDLLYRFYEESIFTTSMNQKLLSVAELLAHKNPNMKILEIGAGTGGATTELLHGFSKAGGKNAYQSFTFTDISAGFFDKAKKKFAQWDRIEFKTLDVEKDIAEQGFTEKYDLVVAANVLHATADLPFAMKNIRSLLRDDGYLLVGELSEDLTSANFLWGPLTGWWLRPRSPGRSGPGLTLDEWRNELAADFDSVSEIEAKHDKTDTEQLSSTIVMMARAKPMEYTPTKPLSEEKVHIAGVGSDLSMQDHLQKYLGTRGISASSSSLEDLASREWAGEWLILVDETEGSFLASLQPEQLTALKSWLTKPIKCIWVTRKVYLDPQNTTGGLVTGFARTLRGENSQCQLYTLDLSSDGDITANVIYHVLERAHYSHDDPISRLDYEIAEKDGQLWTCRLVNDTPLENAYGPARKMDASSTQVVKAPHHLVMGEVGILESLTMAQDDAYTAIPDGHVLVDVKAAGLDDRDGFIAQGSLPATSFGRECSGVVTRCGANVSSFSPGDRVAVIGQGTFATQYLAPSDCCSKIPDWLSFEDAAAIPTNFITALYALTTPARVSTGQKILIVNASSTQGIALIKTATALKLDVYAAISDATTKPILTRVGLHSAKIFVNPTNTGRSSVSRSTTFQAYKLVLNTKSGQYADFAHLVANRGTYIEVTSGESSGDVGHVVPNKNVMFASVDLADAYQESKQDLGELLGQVIDMVEKREVDVDSSVSVNGLDSLQSSFAALIEGTSNKQVVSLANVDDQKLIKTRPKTSRFNPHKTYIITGGLGGLGRAISVWMASYGARHIILATSSITRASESGDLLQQLSSYGCNARVEVCDVGDSEAVERLVASIDTPVGGVIHSALKLSDCFFEDITLEDFDAVFGPKVNGSLNLHNSLLNQDLDFFVMLSSGCGVLGNEGQSNYAASSTFLDTFARYRQSLGLPASSVDLGFVEDVGNISERPEIQASLLSRGLRPITVRDVLRVVEGAIATGSPKNLITDSTYDSFVQSQIVLSFGMIDKATAEYQSWAQDAKFGLLRSRAADNAALDSDSDSGESAVQTAFKALRNTLGRLGDAPEGKEAALQPFVCTALVAKLAQVLSIKVGDIQPSRSAIQYGMDSLIAIEVRSWARYAFQIDLPINDLTNPYSIQDLSARVSRMIAG.

In terms of domain architecture, Ketosynthase family 3 (KS3) spans arginine 9–phenylalanine 435. Residues cysteine 182, histidine 318, and histidine 358 each act as for beta-ketoacyl synthase activity in the active site. The tract at residues threonine 574 to alanine 881 is malonyl-CoA:ACP transacylase (MAT) domain. An N-terminal hotdog fold region spans residues histidine 953–lysine 1089. The tract at residues histidine 953–aspartate 1253 is dehydratase (DH) domain. The 304-residue stretch at histidine 953 to threonine 1256 folds into the PKS/mFAS DH domain. The Proton acceptor; for dehydratase activity role is filled by histidine 985. Residues methionine 1103–threonine 1256 form a C-terminal hotdog fold region. Aspartate 1169 (proton donor; for dehydratase activity) is an active-site residue. A methyltransferase (CMet) domain region spans residues asparagine 1399 to alanine 1587. An enoyl reductase (ER) domain region spans residues glycine 1830–valine 2136. A ketoreductase (KR) domain region spans residues threonine 2161 to glutamate 2335. The Carrier domain occupies alanine 2464–isoleucine 2541. The residue at position 2501 (serine 2501) is an O-(pantetheine 4'-phosphoryl)serine.

Highly reducing polyketide synthase; part of the gene cluster that mediates the biosynthesis of gibepyrone A, a 2H-pyran-2-one metabolite exhibiting a moderate antimicrobial activity against Gram-positive bacteria and yeasts. The highly reducing polyketide synthase GPY1 is sufficient to produce gibepyrone A. GPY1 uses an acetyl-CoA starter unit, three malonyl-CoA extender units, and two SAM-dependent methylations to establish the gibepyrone A carbon backbone, followed by product release upon intramolecular cyclization. The gibepyrone A derivatives gibepyrones B and D are produced by cluster-independent P450 monooxygenases, probably to protect the fungus from the toxic product. In contrast, the formation of gibepyrones E and F from gibepyrone A is a spontaneous process and independent of enzymatic activity. The protein is Highly reducing polyketide synthase GPY1 of Gibberella fujikuroi (strain CBS 195.34 / IMI 58289 / NRRL A-6831) (Bakanae and foot rot disease fungus).